Reading from the N-terminus, the 219-residue chain is Endonuclease V (219 aa).

Residues D41 and D107 each contribute to the Mg(2+) site.

It belongs to the endonuclease V family. It depends on Mg(2+) as a cofactor.

Its subcellular location is the cytoplasm. It carries out the reaction Endonucleolytic cleavage at apurinic or apyrimidinic sites to products with a 5'-phosphate.. Functionally, DNA repair enzyme involved in the repair of deaminated bases. Selectively cleaves double-stranded DNA at the second phosphodiester bond 3' to a deoxyinosine leaving behind the intact lesion on the nicked DNA. This Desulfurococcus amylolyticus (strain DSM 18924 / JCM 16383 / VKM B-2413 / 1221n) (Desulfurococcus kamchatkensis) protein is Endonuclease V.